Here is a 362-residue protein sequence, read N- to C-terminus: Holliday junction branch migration complex subunit RuvB (362 aa).

The tract at residues 1–183 (MADSSLVGGG…FGFTGHLEFY (183 aa)) is large ATPase domain (RuvB-L). ATP is bound by residues leucine 22, arginine 23, glycine 64, lysine 67, threonine 68, threonine 69, 130 to 132 (EDF), arginine 173, tyrosine 183, and arginine 220. Threonine 68 contacts Mg(2+). Residues 184–254 (SVEELELVLR…TASAALDMYE (71 aa)) form a small ATPAse domain (RuvB-S) region. The interval 257-362 (KRGLDRLDRS…PVAEWLPNGQ (106 aa)) is head domain (RuvB-H). DNA-binding residues include arginine 312 and arginine 317.

Belongs to the RuvB family. As to quaternary structure, homohexamer. Forms an RuvA(8)-RuvB(12)-Holliday junction (HJ) complex. HJ DNA is sandwiched between 2 RuvA tetramers; dsDNA enters through RuvA and exits via RuvB. An RuvB hexamer assembles on each DNA strand where it exits the tetramer. Each RuvB hexamer is contacted by two RuvA subunits (via domain III) on 2 adjacent RuvB subunits; this complex drives branch migration. In the full resolvosome a probable DNA-RuvA(4)-RuvB(12)-RuvC(2) complex forms which resolves the HJ.

The protein resides in the cytoplasm. It carries out the reaction ATP + H2O = ADP + phosphate + H(+). In terms of biological role, the RuvA-RuvB-RuvC complex processes Holliday junction (HJ) DNA during genetic recombination and DNA repair, while the RuvA-RuvB complex plays an important role in the rescue of blocked DNA replication forks via replication fork reversal (RFR). RuvA specifically binds to HJ cruciform DNA, conferring on it an open structure. The RuvB hexamer acts as an ATP-dependent pump, pulling dsDNA into and through the RuvAB complex. RuvB forms 2 homohexamers on either side of HJ DNA bound by 1 or 2 RuvA tetramers; 4 subunits per hexamer contact DNA at a time. Coordinated motions by a converter formed by DNA-disengaged RuvB subunits stimulates ATP hydrolysis and nucleotide exchange. Immobilization of the converter enables RuvB to convert the ATP-contained energy into a lever motion, pulling 2 nucleotides of DNA out of the RuvA tetramer per ATP hydrolyzed, thus driving DNA branch migration. The RuvB motors rotate together with the DNA substrate, which together with the progressing nucleotide cycle form the mechanistic basis for DNA recombination by continuous HJ branch migration. Branch migration allows RuvC to scan DNA until it finds its consensus sequence, where it cleaves and resolves cruciform DNA. In Arthrobacter sp. (strain FB24), this protein is Holliday junction branch migration complex subunit RuvB.